Consider the following 251-residue polypeptide: Transmembrane ascorbate-dependent reductase CYB561 (251 aa).

Met1 carries the N-acetylmethionine modification. Over 1–16 (MEGGAAASTPAALPYY) the chain is Cytoplasmic. A helical membrane pass occupies residues 17 to 37 (VAFSQLLGLTLVAMTGAWLGL). One can recognise a Cytochrome b561 domain in the interval 19 to 220 (FSQLLGLTLV…FGGAVLYILT (202 aa)). The Vesicular portion of the chain corresponds to 38 to 51 (YRGGIAWESDLQFN). Residues 52-72 (AHPLCMVIGLIFLQGDALLVY) form a helical membrane-spanning segment. Positions 53, 73, and 80 each coordinate heme b. Residues 73 to 85 (RVFRNEAKRTTKV) are Cytoplasmic-facing. Positions 80 and 84 each coordinate L-ascorbate. Residues 86-106 (LHGLLHIFALVIALVGLVAVF) traverse the membrane as a helical segment. Heme b is bound by residues His87, 116 to 119 (DLYS), and His121. Residues 107 to 124 (DYHRKEGYADLYSLHSWC) lie on the Vesicular side of the membrane. A helical transmembrane segment spans residues 125-145 (GILVFVLYFVQWLVGFSFFLF). Residues 146 to 158 (PGASFSLRSRYRP) are Cytoplasmic-facing. Arg153 contacts L-ascorbate. The helical transmembrane segment at 159–179 (QHIFFGATIFLLSVGTALLGL) threads the bilayer. Residues His160 and Glu181 each contribute to the heme b site. At 180–198 (KEALLFKLRDKYSAFEPEG) the chain is on the vesicular side. Residues 199-219 (VLANVLGLLLACFGGAVLYIL) traverse the membrane as a helical segment. Over 220-251 (TRADWKRPSQAEEQALSMDFKTLTEGDSPGSQ) the chain is Cytoplasmic. Lys225 is a heme b binding site. Residue Ser247 is modified to Phosphoserine.

Requires heme b as cofactor.

Its subcellular location is the cytoplasmic vesicle. The protein localises to the secretory vesicle. It localises to the chromaffin granule membrane. The catalysed reaction is monodehydro-L-ascorbate radical(out) + L-ascorbate(in) = monodehydro-L-ascorbate radical(in) + L-ascorbate(out). Transmembrane reductase that uses ascorbate as an electron donor in the cytoplasm and transfers electrons across membranes to reduce monodehydro-L-ascorbate radical in the lumen of secretory vesicles. It is therefore involved the regeneration and homeostasis within secretory vesicles of ascorbate which in turn provides reducing equivalents needed to support the activity of intravesicular enzymes. In Pongo abelii (Sumatran orangutan), this protein is Transmembrane ascorbate-dependent reductase CYB561 (CYB561).